The following is a 199-amino-acid chain: Thymidylate kinase (199 aa).

7 to 14 contacts ATP; it reads GTEGVGKT.

The protein belongs to the thymidylate kinase family.

It catalyses the reaction dTMP + ATP = dTDP + ADP. Functionally, phosphorylation of dTMP to form dTDP in both de novo and salvage pathways of dTTP synthesis. The sequence is that of Thymidylate kinase from Acinetobacter baumannii (strain ATCC 17978 / DSM 105126 / CIP 53.77 / LMG 1025 / NCDC KC755 / 5377).